We begin with the raw amino-acid sequence, 1339 residues long: DNA polymerase alpha catalytic subunit (1339 aa).

2 disordered regions span residues 1–90 (MSGG…SMSD) and 177–203 (NVER…GYRN). The segment covering 27-36 (DQWRSLREEV) has biased composition (basic and acidic residues). The segment covering 79-89 (PKQQTLAQSMS) has biased composition (polar residues). Zn(2+) contacts are provided by Cys-1179, Cys-1182, Cys-1213, Cys-1216, Cys-1233, Cys-1243, Cys-1271, and Cys-1286. The CysA-type zinc finger occupies 1179-1216 (CTHCRLMTPINPHTRVMEVLADQERQRDRFDLYVCVSC). The short motif at 1243–1271 (CGSAAAVKAVRTQFTYYRALFDVPHAPGC) is the CysB motif element.

The protein belongs to the DNA polymerase type-B family.

Its subcellular location is the nucleus. The catalysed reaction is DNA(n) + a 2'-deoxyribonucleoside 5'-triphosphate = DNA(n+1) + diphosphate. Polymerase alpha in a complex with DNA primase is a replicative polymerase. The protein is DNA polymerase alpha catalytic subunit of Leishmania donovani.